Here is a 473-residue protein sequence, read N- to C-terminus: Photosystem II CP43 reaction center protein (473 aa).

A propeptide spanning residues 1-14 is cleaved from the precursor; it reads MKILYSLRRFYHVE. An N-acetylthreonine modification is found at threonine 15. Threonine 15 carries the post-translational modification Phosphothreonine. Transmembrane regions (helical) follow at residues 69-93, 134-155, 178-200, 255-275, and 291-312; these read LFEVAHFVPEKPMYEQGLILLPHLA, LLGPETLEESFPFFGYVWKDRN, KALYFGGVYDTWAPGGGDVRKIT, KPFAWARRAFVWSGEAYLSYS, and WFNNTAYPSEFYGPTGPEASQA. Glutamate 367 is a [CaMn4O5] cluster binding site. A helical membrane pass occupies residues 447 to 471; sequence RARAAAAGFEKGIDRDLEPVLYMNP.

The protein belongs to the PsbB/PsbC family. PsbC subfamily. PSII is composed of 1 copy each of membrane proteins PsbA, PsbB, PsbC, PsbD, PsbE, PsbF, PsbH, PsbI, PsbJ, PsbK, PsbL, PsbM, PsbT, PsbX, PsbY, PsbZ, Psb30/Ycf12, at least 3 peripheral proteins of the oxygen-evolving complex and a large number of cofactors. It forms dimeric complexes. Binds multiple chlorophylls and provides some of the ligands for the Ca-4Mn-5O cluster of the oxygen-evolving complex. It may also provide a ligand for a Cl- that is required for oxygen evolution. PSII binds additional chlorophylls, carotenoids and specific lipids. serves as cofactor.

It is found in the plastid. The protein localises to the chloroplast thylakoid membrane. Its function is as follows. One of the components of the core complex of photosystem II (PSII). It binds chlorophyll and helps catalyze the primary light-induced photochemical processes of PSII. PSII is a light-driven water:plastoquinone oxidoreductase, using light energy to abstract electrons from H(2)O, generating O(2) and a proton gradient subsequently used for ATP formation. The polypeptide is Photosystem II CP43 reaction center protein (Lolium perenne (Perennial ryegrass)).